The sequence spans 458 residues: Chondroitin hydrolase (458 aa).

The first 22 residues, 1–22 (MVIVWYHQLLLVLLIFIGAAKG), serve as a signal peptide directing secretion. The region spanning 358 to 401 (NLDKCRMERCEGRGECYLPRPKTNPAIYNFACRCERPYFGKSCE) is the EGF-like domain. 3 disulfides stabilise this stretch: Cys-362–Cys-373, Cys-367–Cys-389, and Cys-391–Cys-400.

It belongs to the glycosyl hydrolase 56 family.

In terms of biological role, endo-beta-galactosaminidase that specifically hydrolyzes chondroitin, releasing GlcUA-beta-(1-&gt;3)-GalNAc-beta-(1-&gt;4)-GlcUA-beta-(1-&gt;3)-GalNAc as the main product. Also hydrolyzes to a lesser extent chondroitin sulfates (CS-A, CS-C) and hyaluronic acid. May regulate the function of chondroitin in cell division. This chain is Chondroitin hydrolase, found in Caenorhabditis elegans.